Reading from the N-terminus, the 450-residue chain is UDP-N-acetylmuramoylalanine--D-glutamate ligase (450 aa).

119–125 serves as a coordination point for ATP; it reads GSNGKTT.

It belongs to the MurCDEF family.

The protein localises to the cytoplasm. It carries out the reaction UDP-N-acetyl-alpha-D-muramoyl-L-alanine + D-glutamate + ATP = UDP-N-acetyl-alpha-D-muramoyl-L-alanyl-D-glutamate + ADP + phosphate + H(+). It functions in the pathway cell wall biogenesis; peptidoglycan biosynthesis. Its function is as follows. Cell wall formation. Catalyzes the addition of glutamate to the nucleotide precursor UDP-N-acetylmuramoyl-L-alanine (UMA). The protein is UDP-N-acetylmuramoylalanine--D-glutamate ligase of Bacillus cereus (strain B4264).